Reading from the N-terminus, the 390-residue chain is Phosphopentomutase (390 aa).

Mn(2+)-binding residues include Asp9, Asp283, His288, Asp324, His325, and His336.

The protein belongs to the phosphopentomutase family. Mn(2+) is required as a cofactor.

The protein localises to the cytoplasm. The catalysed reaction is 2-deoxy-alpha-D-ribose 1-phosphate = 2-deoxy-D-ribose 5-phosphate. It carries out the reaction alpha-D-ribose 1-phosphate = D-ribose 5-phosphate. The protein operates within carbohydrate degradation; 2-deoxy-D-ribose 1-phosphate degradation; D-glyceraldehyde 3-phosphate and acetaldehyde from 2-deoxy-alpha-D-ribose 1-phosphate: step 1/2. Functionally, isomerase that catalyzes the conversion of deoxy-ribose 1-phosphate (dRib-1-P) and ribose 1-phosphate (Rib-1-P) to deoxy-ribose 5-phosphate (dRib-5-P) and ribose 5-phosphate (Rib-5-P), respectively. The chain is Phosphopentomutase from Thermotoga maritima (strain ATCC 43589 / DSM 3109 / JCM 10099 / NBRC 100826 / MSB8).